The chain runs to 257 residues: Probable septum site-determining protein MinC (257 aa).

Over residues 123 to 141 the composition is skewed to low complexity; sequence AVEAAAAPAAEPTPEPGAA. Residues 123-144 form a disordered region; the sequence is AVEAAAAPAAEPTPEPGAASQP.

It belongs to the MinC family. Interacts with MinD and FtsZ.

Cell division inhibitor that blocks the formation of polar Z ring septums. Rapidly oscillates between the poles of the cell to destabilize FtsZ filaments that have formed before they mature into polar Z rings. Prevents FtsZ polymerization. This is Probable septum site-determining protein MinC from Burkholderia multivorans (strain ATCC 17616 / 249).